Consider the following 40-residue polypeptide: Photosystem II reaction center protein J (40 aa).

A helical transmembrane segment spans residues 8–28; that stretch reads IPLWLIGTVAGIAVIGLVGVF.

The protein belongs to the PsbJ family. PSII is composed of 1 copy each of membrane proteins PsbA, PsbB, PsbC, PsbD, PsbE, PsbF, PsbH, PsbI, PsbJ, PsbK, PsbL, PsbM, PsbT, PsbX, PsbY, PsbZ, Psb30/Ycf12, at least 3 peripheral proteins of the oxygen-evolving complex and a large number of cofactors. It forms dimeric complexes.

The protein resides in the plastid. Its subcellular location is the chloroplast thylakoid membrane. Functionally, one of the components of the core complex of photosystem II (PSII). PSII is a light-driven water:plastoquinone oxidoreductase that uses light energy to abstract electrons from H(2)O, generating O(2) and a proton gradient subsequently used for ATP formation. It consists of a core antenna complex that captures photons, and an electron transfer chain that converts photonic excitation into a charge separation. This is Photosystem II reaction center protein J from Secale cereale (Rye).